The chain runs to 189 residues: Riboflavin kinase (189 aa).

The Mg(2+) site is built by Thr-42 and Asn-44. Residue Glu-124 is the Nucleophile of the active site.

It belongs to the flavokinase family. Zn(2+) is required as a cofactor. It depends on Mg(2+) as a cofactor.

The catalysed reaction is riboflavin + ATP = FMN + ADP + H(+). It functions in the pathway cofactor biosynthesis; FMN biosynthesis; FMN from riboflavin (ATP route): step 1/1. In terms of biological role, catalyzes the phosphorylation of riboflavin (vitamin B2) to form flavin mononucleotide (FMN) coenzyme. This Candida glabrata (strain ATCC 2001 / BCRC 20586 / JCM 3761 / NBRC 0622 / NRRL Y-65 / CBS 138) (Yeast) protein is Riboflavin kinase (FMN1).